Here is a 353-residue protein sequence, read N- to C-terminus: Lipase ZK262.3 (353 aa).

The signal sequence occupies residues 1 to 22 (MPKNLRFSVFLLFLLCINSVFG). Residues Asn-32 and Asn-64 are each glycosylated (N-linked (GlcNAc...) asparagine). Ser-163 (nucleophile) is an active-site residue. Asp-221 (charge relay system) is an active-site residue. N-linked (GlcNAc...) asparagine glycosylation is present at Asn-267. An intrachain disulfide couples Cys-277 to Cys-288. Residue His-306 is the Charge relay system of the active site.

This sequence belongs to the AB hydrolase superfamily. Lipase family.

It localises to the secreted. Functionally, probable lipase. This Caenorhabditis elegans protein is Lipase ZK262.3.